A 659-amino-acid chain; its full sequence is Pentatricopeptide repeat-containing protein At3g26782, mitochondrial (659 aa).

A mitochondrion-targeting transit peptide spans 1 to 24; that stretch reads MKVRSKKALFCSVSRLLHTERHTE. PPR repeat units lie at residues 40-74, 75-109, 110-144, 145-171, 182-216, 217-249, 250-284, 286-320, 321-351, 352-386, 387-422, and 423-453; these read DVFS…SLYP, TRSS…GYQS, DIFV…NIVS, WTSM…LLVD, DSMG…GFDR, GVSV…IVDK, DRVS…KVVT, NAIT…GLED, DVIV…MKNK, NVRS…GVRP, NYIT…GVEP, and GLEH…MKMK. Positions 458–533 are type E motif; it reads IWSSLLAACR…PPGFSLLELN (76 aa). The tract at residues 534–564 is type E(+) motif; sequence GEVHVFLIGDEEHPQREKIYEFLAELNRKLL. The interval 565–659 is type DYW motif; it reads EAGYVSNTSS…DGGCSCGDYW (95 aa).

It belongs to the PPR family. PCMP-H subfamily.

The protein localises to the mitochondrion. The protein is Pentatricopeptide repeat-containing protein At3g26782, mitochondrial (PCMP-H34) of Arabidopsis thaliana (Mouse-ear cress).